The chain runs to 201 residues: Lipopolysaccharide core heptose(II)-phosphate phosphatase (201 aa).

An N-terminal signal peptide occupies residues 1–35 (MLAFTLRFIKNKRYFAILAGALVIIAGLTSQHAWS).

The protein belongs to the phosphoglycerate mutase family. Ais subfamily.

It is found in the periplasm. It participates in bacterial outer membrane biogenesis; lipopolysaccharide metabolism. Catalyzes the dephosphorylation of heptose(II) of the outer membrane lipopolysaccharide core. This chain is Lipopolysaccharide core heptose(II)-phosphate phosphatase, found in Salmonella enteritidis PT4 (strain P125109).